The sequence spans 473 residues: Presenilin-B (473 aa).

The interval 1-141 is disordered; sequence MSSDNNNDPF…PLLNKKEKDD (141 aa). Residues 1 to 164 are Cytoplasmic-facing; that stretch reads MSSDNNNDPF…DDEVSLQDFS (164 aa). The span at 22 to 46 shows a compositional bias: polar residues; that stretch reads RVSTTTSPNRQSINSSPKQSSPKST. A compositionally biased stretch (low complexity) spans 54–72; sequence NIILDLNDNNNDNNNTNNY. A compositionally biased stretch (basic and acidic residues) spans 79 to 89; sequence VDNKNKFENKD. A helical membrane pass occupies residues 165–185; that stretch reads SMIVSIIIPVSITMMAVVFFV. Topologically, residues 186–224 are lumenal; it reads KYLNNQTLYASTLSYTIAGGSSGGGSGADSITGNSFVDS. Residue Asn-190 is glycosylated (N-linked (GlcNAc...) asparagine). The helical transmembrane segment at 225–245 threads the bilayer; sequence LIVAGIVLGMIIVTTVAFVLL. The Cytoplasmic segment spans residues 246-252; sequence YKYRCLK. The chain crosses the membrane as a helical span at residues 253-273; the sequence is ILYGWLFLSVGMMLGSFGTTF. The Lumenal portion of the chain corresponds to 274–286; sequence FQAMLSAANLPLD. A helical transmembrane segment spans residues 287 to 307; sequence YITFAFLIFNFTVCGIIGVFW. Residue Tyr-308 is a topological domain, cytoplasmic. The chain crosses the membrane as a helical span at residues 309-329; that stretch reads AHQYVNQLYLVIISVLMAISL. Topologically, residues 330-334 are lumenal; it reads TRLPQ. Residues 335-355 form a helical membrane-spanning segment; it reads WTIFTLLVIVAIYDLFAVLCP. Asp-348 is a catalytic residue. Topologically, residues 356–389 are cytoplasmic; sequence RGPLKVLVELSQERNENIPALVYETGKGSDSNLK. Residues 390–410 traverse the membrane as a helical segment; sequence LGLGDFIFYSLLISRAALVHM. The active site involves Asp-394. Topologically, residues 411-413 are lumenal; sequence SCV. A helical membrane pass occupies residues 414–434; the sequence is FSTFIAILTGLFLTLLCLAIF. The Cytoplasmic segment spans residues 435–442; sequence KKALPALP. Positions 439–441 match the PAL motif; that stretch reads PAL. Positions 443-463 form an intramembrane region, helical; sequence ISIFLGILFYYLSNNFLTPFI. The Cytoplasmic segment spans residues 464–473; it reads EALTLSQIFV.

It belongs to the peptidase A22A family. As to quaternary structure, homodimer. Component of the gamma-secretase complex, a complex composed of a presenilin homodimer, nicastrin, aph1 and pen2.

It localises to the endoplasmic reticulum membrane. The protein localises to the golgi apparatus membrane. In terms of biological role, probable catalytic subunit of the gamma-secretase complex, an endoprotease complex that catalyzes the intramembrane cleavage of integral membrane proteins such as Notch receptors. Requires the other members of the gamma-secretase complex to have a protease activity. In Dictyostelium discoideum (Social amoeba), this protein is Presenilin-B (psenB).